Consider the following 396-residue polypeptide: 1-deoxy-D-xylulose 5-phosphate reductoisomerase (396 aa).

Residues T10, G11, S12, I13, G36, K37, N38, and N124 each contribute to the NADPH site. 1-deoxy-D-xylulose 5-phosphate is bound at residue K125. Position 126 (E126) interacts with NADPH. D150 contacts Mn(2+). 1-deoxy-D-xylulose 5-phosphate-binding residues include S151, E152, S186, and H209. E152 serves as a coordination point for Mn(2+). Residue G215 coordinates NADPH. 1-deoxy-D-xylulose 5-phosphate is bound by residues S222, N227, K228, and E231. E231 is a binding site for Mn(2+).

This sequence belongs to the DXR family. Mg(2+) serves as cofactor. It depends on Mn(2+) as a cofactor.

It carries out the reaction 2-C-methyl-D-erythritol 4-phosphate + NADP(+) = 1-deoxy-D-xylulose 5-phosphate + NADPH + H(+). Its pathway is isoprenoid biosynthesis; isopentenyl diphosphate biosynthesis via DXP pathway; isopentenyl diphosphate from 1-deoxy-D-xylulose 5-phosphate: step 1/6. Functionally, catalyzes the NADPH-dependent rearrangement and reduction of 1-deoxy-D-xylulose-5-phosphate (DXP) to 2-C-methyl-D-erythritol 4-phosphate (MEP). The chain is 1-deoxy-D-xylulose 5-phosphate reductoisomerase from Glaesserella parasuis serovar 5 (strain SH0165) (Haemophilus parasuis).